The primary structure comprises 415 residues: tRNA (cytosine(38)-C(5))-methyltransferase (415 aa).

The SAM-dependent MTase C5-type domain maps to 4–396 (LRVLELYSGI…TVLCEGFGNA (393 aa)). Residues 13 to 15 (IGG), aspartate 34, 57 to 58 (IE), and serine 76 each bind S-adenosyl-L-methionine. Cysteine 79 is an active-site residue. Serine 376 contacts S-adenosyl-L-methionine.

The protein belongs to the class I-like SAM-binding methyltransferase superfamily. C5-methyltransferase family. Highly expressed in thymus, testis, and at much lower levels in spleen, lung, brain, heart, kidney, liver, skeletal muscle and embryonic stem cells.

It localises to the cytoplasm. The catalysed reaction is cytidine(38) in tRNA + S-adenosyl-L-methionine = 5-methylcytidine(38) in tRNA + S-adenosyl-L-homocysteine + H(+). Specifically methylates cytosine 38 in the anticodon loop of tRNA(Asp). Has higher activity on tRNA(Asp) modified with queuosine at position 34. This chain is tRNA (cytosine(38)-C(5))-methyltransferase (Trdmt1), found in Mus musculus (Mouse).